The chain runs to 263 residues: Tetraspanin-7 (263 aa).

The Cytoplasmic segment spans residues 1 to 7 (MVQCSNN). Residues 8–28 (LLGILNFFTFLLSIPILSAGI) form a helical membrane-spanning segment. Topologically, residues 29 to 45 (WLGKNAATECERFLDKP) are extracellular. Residues 46–66 (MVVLGIFLMFVSIAGLVGACC) form a helical membrane-spanning segment. Residues 67–75 (RVSCLLWLY) lie on the Cytoplasmic side of the membrane. A helical transmembrane segment spans residues 76–96 (LFAMFLLILLGFCFTIFAFAV). At 97–234 (TNRGAGEVIS…NIKNSWKKVA (138 aa)) the chain is on the extracellular side. An N-linked (GlcNAc...) asparagine glycan is attached at Asn180. A helical transmembrane segment spans residues 235 to 255 (KVNIVFLIFLIIVYSVGCCAF). Residues 256–263 (RNNRKRSW) are Cytoplasmic-facing.

The protein belongs to the tetraspanin (TM4SF) family.

The protein localises to the membrane. May be involved in the regulation of cell differentiation. In Arabidopsis thaliana (Mouse-ear cress), this protein is Tetraspanin-7 (TET7).